A 225-amino-acid chain; its full sequence is Phosphatidylserine decarboxylase proenzyme (225 aa).

S189 functions as the Schiff-base intermediate with substrate; via pyruvic acid in the catalytic mechanism. The residue at position 189 (S189) is a Pyruvic acid (Ser); by autocatalysis.

It belongs to the phosphatidylserine decarboxylase family. PSD-A subfamily. As to quaternary structure, heterodimer of a large membrane-associated beta subunit and a small pyruvoyl-containing alpha subunit. Pyruvate is required as a cofactor. In terms of processing, is synthesized initially as an inactive proenzyme. Formation of the active enzyme involves a self-maturation process in which the active site pyruvoyl group is generated from an internal serine residue via an autocatalytic post-translational modification. Two non-identical subunits are generated from the proenzyme in this reaction, and the pyruvate is formed at the N-terminus of the alpha chain, which is derived from the carboxyl end of the proenzyme. The post-translation cleavage follows an unusual pathway, termed non-hydrolytic serinolysis, in which the side chain hydroxyl group of the serine supplies its oxygen atom to form the C-terminus of the beta chain, while the remainder of the serine residue undergoes an oxidative deamination to produce ammonia and the pyruvoyl prosthetic group on the alpha chain.

It localises to the cell membrane. It carries out the reaction a 1,2-diacyl-sn-glycero-3-phospho-L-serine + H(+) = a 1,2-diacyl-sn-glycero-3-phosphoethanolamine + CO2. Its pathway is phospholipid metabolism; phosphatidylethanolamine biosynthesis; phosphatidylethanolamine from CDP-diacylglycerol: step 2/2. In terms of biological role, catalyzes the formation of phosphatidylethanolamine (PtdEtn) from phosphatidylserine (PtdSer). This Amoebophilus asiaticus (strain 5a2) protein is Phosphatidylserine decarboxylase proenzyme.